Here is a 284-residue protein sequence, read N- to C-terminus: Bifunctional protein FolD (284 aa).

NADP(+) contacts are provided by residues Gly-166–Ser-168 and Ile-232.

Belongs to the tetrahydrofolate dehydrogenase/cyclohydrolase family. As to quaternary structure, homodimer.

The enzyme catalyses (6R)-5,10-methylene-5,6,7,8-tetrahydrofolate + NADP(+) = (6R)-5,10-methenyltetrahydrofolate + NADPH. It carries out the reaction (6R)-5,10-methenyltetrahydrofolate + H2O = (6R)-10-formyltetrahydrofolate + H(+). It functions in the pathway one-carbon metabolism; tetrahydrofolate interconversion. Its function is as follows. Catalyzes the oxidation of 5,10-methylenetetrahydrofolate to 5,10-methenyltetrahydrofolate and then the hydrolysis of 5,10-methenyltetrahydrofolate to 10-formyltetrahydrofolate. In Azotobacter vinelandii (strain DJ / ATCC BAA-1303), this protein is Bifunctional protein FolD.